Consider the following 308-residue polypeptide: Cytochrome c biogenesis protein CcsA (308 aa).

7 consecutive transmembrane segments (helical) span residues 2-22, 44-64, 71-91, 143-163, 212-232, 239-259, and 273-293; these read IVSTLEHILTHISFSIVSILI, GMLVTFFCITGLLATHWIYLG, LSESLIFLSWSFALIHSIAYF, MILGYAALLCGSLLSVALMVI, VIGLGFIFLTIGILSGAVWAN, WSWDPKETWAFITWIVFAIYL, and AIVASIGFLIIWICYFGVNLV.

It belongs to the CcmF/CycK/Ccl1/NrfE/CcsA family. As to quaternary structure, may interact with Ccs1.

Its subcellular location is the plastid membrane. Required during biogenesis of c-type cytochromes (cytochrome c6 and cytochrome f) at the step of heme attachment. The chain is Cytochrome c biogenesis protein CcsA from Cuscuta exaltata (Tall dodder).